The primary structure comprises 175 residues: Adenine phosphoribosyltransferase (175 aa).

Belongs to the purine/pyrimidine phosphoribosyltransferase family. As to quaternary structure, homodimer.

Its subcellular location is the cytoplasm. The enzyme catalyses AMP + diphosphate = 5-phospho-alpha-D-ribose 1-diphosphate + adenine. It functions in the pathway purine metabolism; AMP biosynthesis via salvage pathway; AMP from adenine: step 1/1. Its function is as follows. Catalyzes a salvage reaction resulting in the formation of AMP, that is energically less costly than de novo synthesis. The sequence is that of Adenine phosphoribosyltransferase from Oenococcus oeni (strain ATCC BAA-331 / PSU-1).